We begin with the raw amino-acid sequence, 1307 residues long: Contactin-associated protein like 5-3 (1307 aa).

A signal peptide spans 1-24 (MDFVPRLNSVLTLVLSGLWHFGLT). Over 25-1238 (ATNCDNCDDP…PLTNAVLSDS (1214 aa)) the chain is Extracellular. Residues 31 to 175 (CDDPLASFLS…IGMRMEVYGC (145 aa)) form the F5/8 type C domain. C31 and C175 are joined by a disulfide. Laminin G-like domains are found at residues 181 to 361 (VADF…TFSC) and 368 to 545 (PITF…IDLC). Residue N283 is glycosylated (N-linked (GlcNAc...) asparagine). A disulfide bridge connects residues C330 and C361. A glycan (N-linked (GlcNAc...) asparagine) is linked at N497. Cystine bridges form between C513/C545, C551/C562, C556/C571, and C573/C583. The EGF-like 1 domain occupies 547–584 (IKDRCLPNYCEHGGHCVQTWTTFYCNCSNTGYTGATCH). Residues 585–792 (DSIYEQSCEV…LRCYGDRHFW (208 aa)) form the Fibrinogen C-terminal domain. Residues N600, N624, and N637 are each glycosylated (N-linked (GlcNAc...) asparagine). The region spanning 793-958 (NAVSFSTEAS…MVTSGVRPGC (166 aa)) is the Laminin G-like 3 domain. 5 disulfides stabilise this stretch: C931-C958, C962-C975, C969-C984, C986-C996, and C1165-C1200. An EGF-like 2 domain is found at 959-997 (PGHCSSYGNNCHNGGKCVEKHNSYSCDCTKSPYEGPFCQ). Residues 1019-1200 (PVSKNTSTSS…VQGSLREFSC (182 aa)) enclose the Laminin G-like 4 domain. The helical transmembrane segment at 1239 to 1259 (AVIGGVIAVVTFITFCVIGIM) threads the bilayer. Residues 1260–1307 (TRFLYQHKQSHCTSQKKEKEYSENLDSSFRHDIDLQSTTSKCKREYFI) lie on the Cytoplasmic side of the membrane.

Belongs to the neurexin family.

The protein resides in the membrane. Its function is as follows. May play a role in the correct development and proper functioning of the peripheral and central nervous system and be involved in cell adhesion and intercellular communication. This is Contactin-associated protein like 5-3 (Cntnap5c) from Rattus norvegicus (Rat).